The chain runs to 968 residues: RNA polymerase-associated protein RapA (968 aa).

Residues 164 to 334 form the Helicase ATP-binding domain; it reads DVGRRHAPRV…FARLRLLDPN (171 aa). 177-184 contacts ATP; that stretch reads DEVGLGKT. The short motif at 280–283 is the DEAH box element; it reads DEAH. The 173-residue stretch at 490-662 folds into the Helicase C-terminal domain; sequence RVEWLMGYLT…YLASPDQTEG (173 aa).

The protein belongs to the SNF2/RAD54 helicase family. RapA subfamily. As to quaternary structure, interacts with the RNAP. Has a higher affinity for the core RNAP than for the holoenzyme. Its ATPase activity is stimulated by binding to RNAP.

Transcription regulator that activates transcription by stimulating RNA polymerase (RNAP) recycling in case of stress conditions such as supercoiled DNA or high salt concentrations. Probably acts by releasing the RNAP, when it is trapped or immobilized on tightly supercoiled DNA. Does not activate transcription on linear DNA. Probably not involved in DNA repair. The chain is RNA polymerase-associated protein RapA from Escherichia coli (strain 55989 / EAEC).